Consider the following 189-residue polypeptide: Orcokinin peptides (189 aa).

A signal peptide spans 1 to 21; it reads MRGAGGALAVAVAALLVCCSA. 2 consecutive propeptides follow at residues 22 to 124 and 145 to 174; these read DPHQ…TFVK and FYHLSSFDKKRYRADYPMDEIDLSHFPIGS.

This sequence belongs to the orcokinin family. As to expression, orcokinin-like peptide: Expressed in corpora cardiaca (CC), corpora allata (CA), antennal lobe (AL) and gnathal ganglion (GNG) (at protein level). Expression in CC, CA and GNG detected in some animals, in AL in few animals (at protein level). Orcokinin-like peptide precursor-related peptide: Expressed in corpora cardiaca (CC), corpora allata (CA), antennal lobe (AL) and gnathal ganglion (GNG) (at protein level). Expression in GNG detected in most animals, expression in CC, CA and AL detected in some animals (at protein level).

It is found in the secreted. Its function is as follows. Myotropic peptides. The polypeptide is Orcokinin peptides (Agrotis ipsilon (Black cutworm moth)).